The primary structure comprises 167 residues: NADH-quinone oxidoreductase subunit B (167 aa).

Cys-48, Cys-49, Cys-113, and Cys-143 together coordinate [4Fe-4S] cluster.

Belongs to the complex I 20 kDa subunit family. In terms of assembly, NDH-1 is composed of 14 different subunits. Subunits NuoB, C, D, E, F, and G constitute the peripheral sector of the complex. [4Fe-4S] cluster serves as cofactor.

It localises to the cell membrane. The catalysed reaction is a quinone + NADH + 5 H(+)(in) = a quinol + NAD(+) + 4 H(+)(out). Functionally, NDH-1 shuttles electrons from NADH, via FMN and iron-sulfur (Fe-S) centers, to quinones in the respiratory chain. Couples the redox reaction to proton translocation (for every two electrons transferred, four hydrogen ions are translocated across the cytoplasmic membrane), and thus conserves the redox energy in a proton gradient. This chain is NADH-quinone oxidoreductase subunit B, found in Wolbachia pipientis subsp. Culex pipiens (strain wPip).